The primary structure comprises 252 residues: O-methyltransferase hkm8 (252 aa).

Residues Glu-73, 75 to 76, Ser-81, and Asp-100 contribute to the S-adenosyl-L-methionine site; that span reads GT.

This sequence belongs to the class I-like SAM-binding methyltransferase superfamily. Cation-dependent O-methyltransferase family.

The protein operates within secondary metabolite biosynthesis. O-methyltransferase; part of the gene cluster that mediates the biosynthesis of hancockiamides, an unusual new family of N-cinnamoylated piperazines. The NRPS hkm10 and the NmrA-like reductase hkm9 are proposed to convert two molecules of L-Phe to the intermediary piperazine called xenocockiamide A. Xenocockiamide A is then converted to hancockiamide D via a series of hydroxylations and O-methylations. The tyrosinase hkm6 may catalyze an aromatic hydroxylation, then the 2-oxoglutarate-dependent Fe(II) dioxygenase hkm4 and the FAD-dependent phenol hydroxylase hkm7 may catalyze consecutive hydroxylations to install 2 more hydroxy groups, and the methyltransferase hkm8 probably catalyzes two methylations using 2 molecules of S-adenosyl-L-methionine (SAM). The NRPS hkm11 activates and transfers trans-cinnamate supplied by the PAL hkm12 to hancockiamide D and produces hancockiamide A. NRPS Hkm11 has the flexibility to tolerate the bulky hancockiamide G as a substrate and the absence of the acetyl-transferase hkm3 opens up the opportunity for hkm11 to introduce a second N-cinnamoyl moiety. The cytochrome P450 monooxygenase hkm5 catalyzes the methylenedioxy bridge formation, converting hancockiamide A into hancockiamide G. Hkm5 can also convert hancockiamide B into hancockiamide C, and hancockiamide D into hancockiamide H. The N-acetyltransferase hkm3 finally transfers an acetyl group to 1-N of piperazine, converting hancockiamide A into hancockiamide B and hancockiamide G into hancockiamide C. In Aspergillus hancockii, this protein is O-methyltransferase hkm8.